A 508-amino-acid polypeptide reads, in one-letter code: MGLPWYRVHTVVLNDPGRLLSVHIMHTALVAGWAGSMALYELAVFDPSDPVLDPMWRQGMFVIPFMTRLGITNSWGGWSITGGTITNPGIWSYEGVAGAHIVFSGLCFLAAIWHWVYWDLEIFCDERTGKPSLDLPKIFGIHLFLSGVACFGFGAFHVTGLYGPGIWVSDPYGLTGKVQPVSPAWGAEGFDPFVPGGIASHHIAAGTLGILAGLFHLSVRPPQRLYKGLRMGNIETVLSSSIAAVFFAAFVVAGTMWYGSATTPIELFGPTRYQWDQGYFQQEIYRRISAGLAENLSLSEAWSKIPEKLAFYDYIGNNPAKGGLFRAGSMDNGDGIAIGWLGHPVFRDKEGRELFVRRMPTFFETFPVVLVDGDGIVRADVPFRRAESKYSVEQVGVTVEFYGGELNGVSYSDPATVKKYARRAQLGEIFELDRATLKSDGVFRSSPRGWFTFGHASFALLFFFGHIWHGARTLFRDVFAGIDPDLDAQVEFGAFQKLGDPTTKRQAV.

The next 6 helical transmembrane spans lie at 21–36, 101–115, 140–156, 203–218, 237–252, and 457–472; these read SVHI…WAGS, IVFS…IWHW, GIHL…FGAF, IAAG…FHLS, VLSS…AFVV, and SFAL…HGAR.

It belongs to the PsbB/PsbC family. PsbB subfamily. PSII is composed of 1 copy each of membrane proteins PsbA, PsbB, PsbC, PsbD, PsbE, PsbF, PsbH, PsbI, PsbJ, PsbK, PsbL, PsbM, PsbT, PsbX, PsbY, PsbZ, Psb30/Ycf12, at least 3 peripheral proteins of the oxygen-evolving complex and a large number of cofactors. It forms dimeric complexes. The cofactor is Binds multiple chlorophylls. PSII binds additional chlorophylls, carotenoids and specific lipids..

The protein localises to the plastid. It is found in the chloroplast thylakoid membrane. Functionally, one of the components of the core complex of photosystem II (PSII). It binds chlorophyll and helps catalyze the primary light-induced photochemical processes of PSII. PSII is a light-driven water:plastoquinone oxidoreductase, using light energy to abstract electrons from H(2)O, generating O(2) and a proton gradient subsequently used for ATP formation. The polypeptide is Photosystem II CP47 reaction center protein (Lemna minor (Common duckweed)).